The chain runs to 198 residues: GTP cyclohydrolase-2 (198 aa).

Arg49–Glu53 is a binding site for GTP. 3 residues coordinate Zn(2+): Cys54, Cys65, and Cys67. GTP is bound by residues Gln70, Glu92 to Arg94, and Thr114. Asp126 acts as the Proton acceptor in catalysis. The Nucleophile role is filled by Arg128. The GTP site is built by Thr149 and Lys154.

This sequence belongs to the GTP cyclohydrolase II family. Homodimer. The cofactor is Zn(2+).

The catalysed reaction is GTP + 4 H2O = 2,5-diamino-6-hydroxy-4-(5-phosphoribosylamino)-pyrimidine + formate + 2 phosphate + 3 H(+). The protein operates within cofactor biosynthesis; riboflavin biosynthesis; 5-amino-6-(D-ribitylamino)uracil from GTP: step 1/4. Functionally, catalyzes the conversion of GTP to 2,5-diamino-6-ribosylamino-4(3H)-pyrimidinone 5'-phosphate (DARP), formate and pyrophosphate. This is GTP cyclohydrolase-2 from Escherichia fergusonii (strain ATCC 35469 / DSM 13698 / CCUG 18766 / IAM 14443 / JCM 21226 / LMG 7866 / NBRC 102419 / NCTC 12128 / CDC 0568-73).